Consider the following 388-residue polypeptide: Protein FAM199X (388 aa).

Low complexity predominate over residues Ser-288 to Ser-312. Positions Ser-288 to Lys-358 are disordered. Phosphoserine is present on residues Ser-316 and Ser-321. The segment covering Asp-330 to Gln-349 has biased composition (basic residues).

The protein belongs to the FAM199 family.

This Mus musculus (Mouse) protein is Protein FAM199X (Fam199x).